Reading from the N-terminus, the 353-residue chain is Inositol-tetrakisphosphate 1-kinase 3 (353 aa).

Residues 1–25 (MKLTDNEEITMNGTREMETTEQETS) are disordered. Lys-50 and Lys-92 together coordinate 1D-myo-inositol 1,3,4-trisphosphate. ATP contacts are provided by Arg-127 and Lys-177. Positions 138–350 (NLSDSNGRVG…QSQCKKRALA (213 aa)) constitute an ATP-grasp domain. The 1D-myo-inositol 1,3,4-trisphosphate site is built by His-188 and Lys-220. ATP-binding positions include 209–220 (QEFVNHGGVLFK) and Ser-235. Mg(2+) contacts are provided by Asp-300, Asp-315, and Asn-317. Asn-317 is a 1D-myo-inositol 1,3,4-trisphosphate binding site.

Belongs to the ITPK1 family. As to quaternary structure, monomer. The cofactor is Mg(2+). In terms of tissue distribution, highly expressed in leaves and flowers, and at lower levels in roots, stems, cauline leaves and siliques.

It carries out the reaction 1D-myo-inositol 3,4,5,6-tetrakisphosphate + ATP = 1D-myo-inositol 1,3,4,5,6-pentakisphosphate + ADP + H(+). The catalysed reaction is 1D-myo-inositol 1,3,4-trisphosphate + ATP = 1D-myo-inositol 1,3,4,5-tetrakisphosphate + ADP + H(+). It catalyses the reaction 1D-myo-inositol 1,3,4-trisphosphate + ATP = 1D-myo-inositol 1,3,4,6-tetrakisphosphate + ADP + H(+). Kinase that can phosphorylate various inositol polyphosphate such as Ins(3,4,5,6)P4 or Ins(1,3,4)P3. Phosphorylates Ins(3,4,5,6)P4 to form InsP5. This reaction is thought to have regulatory importance, since Ins(3,4,5,6)P4 is an inhibitor of plasma membrane Ca(2+)-activated Cl(-) channels, while Ins(1,3,4,5,6)P5 is not. Also phosphorylates Ins(1,3,4)P3 or a racemic mixture of Ins(1,4,6)P3 and Ins(3,4,6)P3 to form InsP4. Ins(1,3,4,6)P4 is an essential molecule in the hexakisphosphate (InsP6) pathway. This is Inositol-tetrakisphosphate 1-kinase 3 (ITPK3) from Arabidopsis thaliana (Mouse-ear cress).